A 269-amino-acid chain; its full sequence is Shikimate dehydrogenase (NADP(+)) (269 aa).

Residues 17–19 and Thr-64 each bind shikimate; that span reads SKS. The active-site Proton acceptor is the Lys-68. Residue Glu-80 coordinates NADP(+). Asn-89 and Asp-105 together coordinate shikimate. NADP(+) is bound by residues 130-134, 154-159, and Met-213; these read GAGGA and NRTRAK. Position 215 (Tyr-215) interacts with shikimate. Residue Gly-237 participates in NADP(+) binding.

This sequence belongs to the shikimate dehydrogenase family. In terms of assembly, homodimer.

It carries out the reaction shikimate + NADP(+) = 3-dehydroshikimate + NADPH + H(+). It participates in metabolic intermediate biosynthesis; chorismate biosynthesis; chorismate from D-erythrose 4-phosphate and phosphoenolpyruvate: step 4/7. In terms of biological role, involved in the biosynthesis of the chorismate, which leads to the biosynthesis of aromatic amino acids. Catalyzes the reversible NADPH linked reduction of 3-dehydroshikimate (DHSA) to yield shikimate (SA). This Neisseria meningitidis serogroup C / serotype 2a (strain ATCC 700532 / DSM 15464 / FAM18) protein is Shikimate dehydrogenase (NADP(+)).